The following is a 157-amino-acid chain: Protein Smg homolog (157 aa).

The protein belongs to the Smg family.

This is Protein Smg homolog from Shewanella loihica (strain ATCC BAA-1088 / PV-4).